The following is a 371-amino-acid chain: 3-dehydroquinate synthase (371 aa).

Residues 72-77 (DGEEHK), 106-110 (GVVGD), 130-131 (TT), lysine 143, lysine 152, and 170-173 (TLKT) each bind NAD(+). Residues glutamate 185, histidine 248, and histidine 265 each coordinate Zn(2+).

The protein belongs to the sugar phosphate cyclases superfamily. Dehydroquinate synthase family. Co(2+) serves as cofactor. Requires Zn(2+) as cofactor. It depends on NAD(+) as a cofactor.

Its subcellular location is the cytoplasm. It catalyses the reaction 7-phospho-2-dehydro-3-deoxy-D-arabino-heptonate = 3-dehydroquinate + phosphate. The protein operates within metabolic intermediate biosynthesis; chorismate biosynthesis; chorismate from D-erythrose 4-phosphate and phosphoenolpyruvate: step 2/7. Functionally, catalyzes the conversion of 3-deoxy-D-arabino-heptulosonate 7-phosphate (DAHP) to dehydroquinate (DHQ). This is 3-dehydroquinate synthase from Pelotomaculum thermopropionicum (strain DSM 13744 / JCM 10971 / SI).